Reading from the N-terminus, the 500-residue chain is Cobyric acid synthase (500 aa).

The GATase cobBQ-type domain occupies 251 to 449 (KLNIVIPIMP…LHGVFDHPDA (199 aa)). Catalysis depends on Cys332, which acts as the Nucleophile. His441 is a catalytic residue.

Belongs to the CobB/CobQ family. CobQ subfamily.

The protein operates within cofactor biosynthesis; adenosylcobalamin biosynthesis. In terms of biological role, catalyzes amidations at positions B, D, E, and G on adenosylcobyrinic A,C-diamide. NH(2) groups are provided by glutamine, and one molecule of ATP is hydrogenolyzed for each amidation. The sequence is that of Cobyric acid synthase from Marinomonas sp. (strain MWYL1).